Reading from the N-terminus, the 1546-residue chain is Hybrid signal transduction histidine kinase D (1546 aa).

The stretch at 36–63 forms a coiled coil; that stretch reads MRKQKPDHEKTREELIEEINHLRAVSNS. Positions 65–131 constitute a PAS domain; that stretch reads KNARIMLDEM…NIDNVREAVH (67 aa). A PAC domain is found at 139 to 193; that stretch reads IRYETEIFGKSAGTEKITIDFSLMPLFNDKGEVSLILPEGRNITEKRLGELEIER. Residues 218–440 enclose the Histidine kinase 1 domain; that stretch reads NVSHELRTPL…QFTLRLPLTP (223 aa). His-221 is subject to Phosphohistidine; by autocatalysis. Residues 571–686 enclose the Response regulatory 1 domain; sequence IVLVVEDNPE…ELVARVVNLM (116 aa). At Asp-619 the chain carries 4-aspartylphosphate. Positions 747-1010 constitute a Histidine kinase 2 domain; sequence NLSHELRTPL…QFTVVLPIIK (264 aa). His-750 is modified (phosphohistidine; by autocatalysis). Composition is skewed to low complexity over residues 1013-1031 and 1042-1146; these read SSSN…SPPL and NYIN…SNNN. Disordered stretches follow at residues 1013-1148, 1266-1285, and 1313-1350; these read SSSN…NNEK, NNSN…PPSS, and PLSE…KANS. Over residues 1313-1346 the composition is skewed to low complexity; it reads PLSELKSSSNNNNNNNNNSNNNNNNSMSPNLRSP. Positions 1359–1483 constitute a Response regulatory 2 domain; sequence QIMLVDDLEE…ELSNSILTLI (125 aa). Asp-1412 carries the 4-aspartylphosphate modification. The interval 1500–1546 is disordered; sequence QNNNNNNNNNNNNNNNNNNNNNNINNGNDDDSLLLTDSRPCKKANSQ. Residues 1501 to 1526 show a composition bias toward low complexity; that stretch reads NNNNNNNNNNNNNNNNNNNNNNINNG.

The enzyme catalyses ATP + protein L-histidine = ADP + protein N-phospho-L-histidine.. In terms of biological role, acts as a receptor histidine kinase for a signal transduction pathway. This protein undergoes an ATP-dependent autophosphorylation at a conserved histidine residue in the kinase core, and a phosphoryl group is then transferred to a conserved aspartate residue in the receiver domain. The protein is Hybrid signal transduction histidine kinase D (dhkD) of Dictyostelium discoideum (Social amoeba).